We begin with the raw amino-acid sequence, 312 residues long: MNWMELSIVVNHEVEYDVTEILESYGSNGVVIEDSNILEEQPVDKFGEIYDLNPEDYPEKGVRLKAYFNEFTYNENLKSNINYEILSLQQIDKTIYDYQEKLIAEVDWENEWKNYFHPFRASKQFTIVPSWESYVKENDNELCIELDPGMAFGTGDHPTTSMCLKAIETFVKPTDSVIDVGTGSGILSIASHLLGVQRIKALDIDEMAVNVAKENFKKNHCDDAIEAVPGNLLKNENEKFNIVIANILAHIIEEMIEDTYNTLIEDGYFITSGIIEEKYQDIESQMKRIGFKIISVEHDNGWVCIVGQKVSG.

Residues Thr-160, Gly-181, Asp-203, and Asn-246 each contribute to the S-adenosyl-L-methionine site.

Belongs to the methyltransferase superfamily. PrmA family.

It is found in the cytoplasm. It catalyses the reaction L-lysyl-[protein] + 3 S-adenosyl-L-methionine = N(6),N(6),N(6)-trimethyl-L-lysyl-[protein] + 3 S-adenosyl-L-homocysteine + 3 H(+). Its function is as follows. Methylates ribosomal protein L11. The polypeptide is Ribosomal protein L11 methyltransferase (Staphylococcus epidermidis (strain ATCC 12228 / FDA PCI 1200)).